The sequence spans 188 residues: Scytalone dehydratase (188 aa).

Positions 27, 47, and 50 each coordinate substrate. Active-site residues include His82 and His107. Asn128 provides a ligand contact to substrate.

The protein belongs to the scytalone dehydratase family. As to quaternary structure, homotrimer. Each subunit contains an active site, located in the central part of the hydrophobic core of the monomer, which functions independently.

It is found in the endosome. It carries out the reaction scytalone = 1,3,8-trihydroxynaphthalene + H2O. The protein operates within pigment biosynthesis; melanin biosynthesis. Its activity is regulated as follows. Carpropamid acts as an efficient inhibitor of scytalone dehydratase activity. Scytalone dehydratase; part of the gene cluster that mediates the biosynthesis of dihydroxynaphthalene (DHN)-melanin, a bluish-green pigment and a structural component of the conidial wall. Within the pathway, catalyzes the dehydration of scytalone as well as of vermelone. The chain is Scytalone dehydratase from Colletotrichum orbiculare (strain 104-T / ATCC 96160 / CBS 514.97 / LARS 414 / MAFF 240422) (Cucumber anthracnose fungus).